The chain runs to 325 residues: Delta(1)-pyrroline-2-carboxylate reductase (325 aa).

It belongs to the ornithine cyclodeaminase/mu-crystallin family.

The catalysed reaction is L-proline + NAD(+) = 1-pyrroline-2-carboxylate + NADH + H(+). The enzyme catalyses L-proline + NADP(+) = 1-pyrroline-2-carboxylate + NADPH + H(+). Catalyzes the reduction of Delta(1)-pyrroline-2-carboxylate (Pyr2C) to L-proline, using preferentially NADPH over NADH as the electron donor. May be involved in a degradation pathway that converts trans-3-hydroxy-L-proline (t3LHyp) to L-proline. The chain is Delta(1)-pyrroline-2-carboxylate reductase from Bacillus cereus (strain ZK / E33L).